A 489-amino-acid polypeptide reads, in one-letter code: 3-octaprenyl-4-hydroxybenzoate carboxy-lyase (489 aa).

Asn172 contributes to the Mn(2+) binding site. Residues 175–177 (IYR), 189–191 (RWL), and 194–195 (RG) each bind prenylated FMN. Mn(2+) is bound at residue Glu238. The active-site Proton donor is the Asp287.

It belongs to the UbiD family. In terms of assembly, homohexamer. Prenylated FMN is required as a cofactor. Requires Mn(2+) as cofactor.

The protein localises to the cell membrane. It catalyses the reaction a 4-hydroxy-3-(all-trans-polyprenyl)benzoate + H(+) = a 2-(all-trans-polyprenyl)phenol + CO2. Its pathway is cofactor biosynthesis; ubiquinone biosynthesis. Catalyzes the decarboxylation of 3-octaprenyl-4-hydroxy benzoate to 2-octaprenylphenol, an intermediate step in ubiquinone biosynthesis. The chain is 3-octaprenyl-4-hydroxybenzoate carboxy-lyase from Salmonella arizonae (strain ATCC BAA-731 / CDC346-86 / RSK2980).